The primary structure comprises 584 residues: Complement component C8 alpha chain (584 aa).

The signal sequence occupies residues 1–20 (MFAVVFFILSLMTCQPGVTA). Positions 21 to 30 (QEKVNQRVRR) are excised as a propeptide. In terms of domain architecture, TSP type-1 1 spans 38–91 (TCQLSNWSEWTDCFPCQDKKYRHRSLLQPNKFGGTICSGDIWDQASCSSSTTCV). Cystine bridges form between cysteine 39/cysteine 74, cysteine 50/cysteine 84, cysteine 53/cysteine 90, cysteine 96/cysteine 108, cysteine 102/cysteine 121, cysteine 115/cysteine 130, and cysteine 140/cysteine 177. Tryptophan 44 carries a C-linked (Man) tryptophan glycan. Positions 94–132 (AQCGQDFQCKETGRCLKRHLVCNGDQDCLDGSDEDDCED) constitute an LDL-receptor class A domain. Residues leucine 113, asparagine 116, aspartate 118, aspartate 120, aspartate 126, and glutamate 127 each coordinate Ca(2+). Residues 135–498 (AIDEDCSQYE…QYLMEFNACR (364 aa)) enclose the MACPF domain. The next 4 beta stranded transmembrane spans lie at 248–256 (FGVTIGIGP), 259–266 (SPLLVGVG), 377–384 (GGSLGIQY), and 390–395 (VGGGLS). Cysteine 375 and cysteine 399 are joined by a disulfide. An N-linked (GlcNAc...) asparagine glycan is attached at asparagine 437. Intrachain disulfides connect cysteine 497/cysteine 544, cysteine 499/cysteine 515, cysteine 502/cysteine 517, and cysteine 519/cysteine 528. An EGF-like domain is found at 499–529 (CGPCFNNGVPILEGTSCRCQCRLGSLGAACE). A TSP type-1 2 domain is found at 539 to 583 (DGSWSCWSSWSVCRAGIQERRRECDNPAPQNGGASCPGRKVQTQA). Tryptophan 542, tryptophan 545, and tryptophan 548 each carry a C-linked (Man) tryptophan glycan. Intrachain disulfides connect cysteine 551–cysteine 584 and cysteine 562–cysteine 574. The interval 562-584 (CDNPAPQNGGASCPGRKVQTQAC) is disordered.

It belongs to the complement C6/C7/C8/C9 family. In terms of assembly, heterotrimer of 3 chains: alpha (C8A), beta (C8B) and gamma (C8G); the alpha and gamma chains are disulfide bonded. Component of the membrane attack complex (MAC), composed of complement C5b, C6, C7, C8A, C8B, C8G and multiple copies of the pore-forming subunit C9.

The protein localises to the secreted. It localises to the target cell membrane. With respect to regulation, membrane attack complex (MAC) assembly is inhibited by CD59, thereby protecting self-cells from damage during complement activation. CD59 acts by binding to the beta-haipins of C8 (C8A and C8B), forming an intermolecular beta-sheet that prevents incorporation of the multiple copies of C9 required for complete formation of the osmolytic pore. MAC assembly is also inhibited by clusterin (CLU) chaperones that inhibit polymerization of C9. In terms of biological role, component of the membrane attack complex (MAC), a multiprotein complex activated by the complement cascade, which inserts into a target cell membrane and forms a pore, leading to target cell membrane rupture and cell lysis. The MAC is initiated by proteolytic cleavage of C5 into complement C5b in response to the classical, alternative, lectin and GZMK complement pathways. The complement pathways consist in a cascade of proteins that leads to phagocytosis and breakdown of pathogens and signaling that strengthens the adaptive immune system. C8A, together with C8B and C8G, inserts into the target membrane, but does not form pores by itself. During MAC assembly, associates with C5b, C6 and C7 to form the C5b8 intermediate complex that inserts into the target membrane and traverses the bilayer increasing membrane rigidity. The polypeptide is Complement component C8 alpha chain (Homo sapiens (Human)).